The sequence spans 1031 residues: MRPAALLLCLTLLHCAGAGFPEDSEPISISHGNYTKQYPVFVGHKPGRNTTQRHRLDIQMIMIMNRTLYVAARDHIYTVDIDTSHTEEIYCSKKLTWKSRQADVDTCRMKGKHKDECHNFIKVLLKKNDDTLFVCGTNAFNPSCRNYRVDTLETFGDEFSGMARCPYDAKHANIALFADGKLYSATVTDFLAIDAVIYRSLGDSPTLRTVKHDSKWLKEPYFVQAVDYGDYIYFFFREIAVEYNTMGKVVFPRVAQVCKNDMGGSQRVLEKQWTSFLKARLNCSVPGDSHFYFNILQAVTDVIRINGRDVVLATFSTPYNSIPGSAVCAYDMLDIANVFTGRFKEQKSPDSTWTPVPDERVPKPRPGCCAGSSSLEKYATSNEFPDDTLNFIKTHPLMDEAVPSIINRPWFLRTMVRYRLTKIAVDNAAGPYQNHTVVFLGSEKGIILKFLARIGSSGFLNGSLFLEEMNVYNPEKCSYDGVEDKRIMGMQLDRASGSLYVAFSTCVIKVPLGRCERHGKCKKTCIASRDPYCGWVRESGSCAHLSPLSRLTFEQDIERGNTDGLGDCHNSFVALNGHASSLYPSTTTSDSASRDGYESRGGMLDWNDLLEAPGSTDPLGAVSSHNHQDKKGVIRESYLKSNDQLVPVTLLAIAVILAFVMGAVFSGIIVYCVCDHRRKDVAVVQRKEKELTHSRRGSMSSVTKLSGLFGDTQSKDPKPEAILTPLMHNGKLATPSNTAKMLIKADQHHLDLTALPTPESTPTLQQKRKPNRGSREWERNQNIINACTKDMPPMGSPVIPTDLPLRASPSHIPSVVVLPITQQGYQHEYVDQPKMSEVVAQMALEDQAATLEYKTIKEHLSSKSPNHGVNLVENLDSLPPKVPQREASLGPPGTSLSQTGLSKRLEMQHSSSYGLEYKRSYPTNSLTRSHQTTTLKRNNTNSSNSSHLSRNQSFGRGDNPPPAPQRVDSIQVHSSQPSGQAVTVSRQPSLNAYNSLTRSGLKRTPSLKPDVPPKPSFAPLSTSMKPNDACT.

A signal peptide spans 1–18; the sequence is MRPAALLLCLTLLHCAGA. Residues 19–649 are Extracellular-facing; that stretch reads GFPEDSEPIS…KSNDQLVPVT (631 aa). The Sema domain maps to 24-512; the sequence is SEPISISHGN…FSTCVIKVPL (489 aa). 3 N-linked (GlcNAc...) asparagine glycosylation sites follow: Asn33, Asn49, and Asn65. 4 disulfides stabilise this stretch: Cys107–Cys117, Cys135–Cys144, Cys258–Cys369, and Cys283–Cys328. Asn282 is a glycosylation site (N-linked (GlcNAc...) asparagine). N-linked (GlcNAc...) asparagine glycosylation is found at Asn434 and Asn461. 4 cysteine pairs are disulfide-bonded: Cys477/Cys506, Cys515/Cys533, Cys521/Cys568, and Cys525/Cys542. The chain crosses the membrane as a helical span at residues 650 to 670; it reads LLAIAVILAFVMGAVFSGIIV. Topologically, residues 671–1031 are cytoplasmic; sequence YCVCDHRRKD…TSMKPNDACT (361 aa). Position 698 is a phosphoserine (Ser698). 3 disordered regions span residues 754–777, 861–902, and 914–1031; these read ALPTPESTPTLQQKRKPNRGSREW, SSKS…TGLS, and GLEY…DACT. Residues 921 to 931 are compositionally biased toward polar residues; sequence YPTNSLTRSHQ. Over residues 932-951 the composition is skewed to low complexity; that stretch reads TTTLKRNNTNSSNSSHLSRN. Ser953 is modified (phosphoserine). Polar residues-rich tracts occupy residues 971-998 and 1019-1031; these read QVHSSQPSGQAVTVSRQPSLNAYNSLTR and PLSTSMKPNDACT.

It belongs to the semaphorin family. Active as a homodimer or oligomer. The SEMA6A homodimer interacts with a PLXNA2 homodimer, giving rise to a heterotetramer. Interacts with EVL. As to expression, particularly high levels in spinal cord, cerebellum, metencephalon, superior and inferior colliculus, diencephalon, olfactory bulb and eye.

The protein localises to the cell membrane. Its function is as follows. Cell surface receptor for PLXNA2 that plays an important role in cell-cell signaling. Required for normal granule cell migration in the developing cerebellum. Promotes reorganization of the actin cytoskeleton and plays an important role in axon guidance in the developing central nervous system. Can act as repulsive axon guidance cue. Has repulsive action towards migrating granular neurons. May play a role in channeling sympathetic axons into the sympathetic chains and controlling the temporal sequence of sympathetic target innervation. The protein is Semaphorin-6A (Sema6a) of Mus musculus (Mouse).